The primary structure comprises 230 residues: Uracil-DNA glycosylase (230 aa).

D65 acts as the Proton acceptor in catalysis.

This sequence belongs to the uracil-DNA glycosylase (UDG) superfamily. UNG family.

It is found in the cytoplasm. It carries out the reaction Hydrolyzes single-stranded DNA or mismatched double-stranded DNA and polynucleotides, releasing free uracil.. Its function is as follows. Excises uracil residues from the DNA which can arise as a result of misincorporation of dUMP residues by DNA polymerase or due to deamination of cytosine. This Lactiplantibacillus plantarum (strain ATCC BAA-793 / NCIMB 8826 / WCFS1) (Lactobacillus plantarum) protein is Uracil-DNA glycosylase.